Consider the following 640-residue polypeptide: Probable potassium transport system protein Kup 2 (640 aa).

The disordered stretch occupies residues 1 to 20 (MTADIAATPAETPATNGHGD). 12 helical membrane passes run 30-50 (LTLG…LYAL), 71-91 (VVSL…VVIL), 117-137 (ASII…DAVI), 155-175 (AAFD…LFAV), 183-203 (VAAF…IAAF), 224-244 (FMLH…LAVT), 265-285 (WLFV…ALVI), 294-314 (PFFL…ATVA), 363-383 (LLLV…ALAS), 385-405 (YGIS…VVIW), 410-430 (WSPI…LTFL), and 437-457 (VLEG…LMYT).

This sequence belongs to the HAK/KUP transporter (TC 2.A.72) family.

It is found in the cell inner membrane. It carries out the reaction K(+)(in) + H(+)(in) = K(+)(out) + H(+)(out). Transport of potassium into the cell. Likely operates as a K(+):H(+) symporter. The chain is Probable potassium transport system protein Kup 2 from Bradyrhizobium sp. (strain ORS 278).